A 196-amino-acid chain; its full sequence is Translation initiation factor IF-3 (196 aa).

Belongs to the IF-3 family. In terms of assembly, monomer.

Its subcellular location is the cytoplasm. Its function is as follows. IF-3 binds to the 30S ribosomal subunit and shifts the equilibrium between 70S ribosomes and their 50S and 30S subunits in favor of the free subunits, thus enhancing the availability of 30S subunits on which protein synthesis initiation begins. In Wigglesworthia glossinidia brevipalpis, this protein is Translation initiation factor IF-3.